The chain runs to 406 residues: 4-hydroxy-3-methylbut-2-en-1-yl diphosphate synthase (ferredoxin) (406 aa).

4 residues coordinate [4Fe-4S] cluster: cysteine 315, cysteine 318, cysteine 349, and glutamate 356.

Belongs to the IspG family. It depends on [4Fe-4S] cluster as a cofactor.

It carries out the reaction (2E)-4-hydroxy-3-methylbut-2-enyl diphosphate + 2 oxidized [2Fe-2S]-[ferredoxin] + H2O = 2-C-methyl-D-erythritol 2,4-cyclic diphosphate + 2 reduced [2Fe-2S]-[ferredoxin] + H(+). It functions in the pathway isoprenoid biosynthesis; isopentenyl diphosphate biosynthesis via DXP pathway; isopentenyl diphosphate from 1-deoxy-D-xylulose 5-phosphate: step 5/6. Its function is as follows. Converts 2C-methyl-D-erythritol 2,4-cyclodiphosphate (ME-2,4cPP) into 1-hydroxy-2-methyl-2-(E)-butenyl 4-diphosphate. This is 4-hydroxy-3-methylbut-2-en-1-yl diphosphate synthase (ferredoxin) from Trichodesmium erythraeum (strain IMS101).